A 408-amino-acid polypeptide reads, in one-letter code: Putative gustatory receptor 58b (408 aa).

Topologically, residues 1–44 (MLHPKLGRVMNVVYYHSVVFALMSTTLRIRSCRKCLRLEKVSRT) are cytoplasmic. A helical membrane pass occupies residues 45–65 (YTIYSFFVGIFLFLNLYFMVP). Topologically, residues 66 to 82 (RIMEDGYMKYNIVLQWN) are extracellular. Residues 83–103 (FFVMLFLRAIAVVSCYGTLWL) traverse the membrane as a helical segment. The Cytoplasmic portion of the chain corresponds to 104 to 150 (KRHKIIQLYKYSLIYWKRFGHITRAIVDKKELLDLQESLARIMIRKI). Residues 151–171 (ILLYSAFLCSTVLQYQLLSVI) traverse the membrane as a helical segment. Topologically, residues 172-193 (NPQIFLAFCARLTHFLHFLCVK) are extracellular. Residues 194 to 214 (MGFFGVLVLLNHQFLVIHLAI) traverse the membrane as a helical segment. The Cytoplasmic segment spans residues 215 to 245 (NALHGRKARKKWKALRSVAAMHLKTLRLARR). The helical transmembrane segment at 246 to 266 (IFDMFDIANATVFINMFMTAI) threads the bilayer. Topologically, residues 267-284 (NILYHAVQYSNSSIKSNG) are extracellular. N-linked (GlcNAc...) asparagine glycosylation is present at Asn277. Residues 285-305 (WGILFGNGLIVFNFWGTMALM) traverse the membrane as a helical segment. The Cytoplasmic portion of the chain corresponds to 306 to 364 (EMLDSVVTSCNNTGQQLRQLSDLPKVGPKMQRELDVFTMQLRQNRLVYKICGIVELDKP). Residues 365 to 385 (ACLSYIGSILSNVIILMQFDL) form a helical membrane-spanning segment. Topologically, residues 386–408 (RRQRQPINDRQYLIHLMKNKTKV) are extracellular. Residue Asn404 is glycosylated (N-linked (GlcNAc...) asparagine).

Belongs to the insect chemoreceptor superfamily. Gustatory receptor (GR) family. Gr22e subfamily. In terms of tissue distribution, expressed in the adult labellar chemosensory neurons, labral sense organ and thorax. In larvae, is in neurons of the terminal external chemosensory organ as well as in the dorsal pharyngeal sense organ.

It is found in the cell membrane. Its function is as follows. Probable gustatory receptor which mediates acceptance or avoidance behavior, depending on its substrates. This chain is Putative gustatory receptor 58b (Gr58b), found in Drosophila melanogaster (Fruit fly).